We begin with the raw amino-acid sequence, 393 residues long: STE20-related kinase adapter protein alpha (393 aa).

Ser-2 and Ser-9 each carry phosphoserine. The Protein kinase domain maps to 32–341; it reads YELLSVIGKG…ASTLLNHSFF (310 aa). Thr-381 carries the post-translational modification Phosphothreonine; by LKB1.

It belongs to the protein kinase superfamily. STE Ser/Thr protein kinase family. STE20 subfamily. As to quaternary structure, component of a trimeric complex composed of STK11/LKB1, STRAD (STRADA or STRADB) and CAB39/MO25 (CAB39/MO25alpha or CAB39L/MO25beta): the complex tethers STK11/LKB1 in the cytoplasm and stimulates its catalytic activity. Expressed in liver.

The protein localises to the nucleus. The protein resides in the cytoplasm. In terms of biological role, pseudokinase which, in complex with CAB39/MO25 (CAB39/MO25alpha or CAB39L/MO25beta), binds to and activates STK11/LKB1. Adopts a closed conformation typical of active protein kinases and binds STK11/LKB1 as a pseudosubstrate, promoting conformational change of STK11/LKB1 in an active conformation. The chain is STE20-related kinase adapter protein alpha (Strada) from Rattus norvegicus (Rat).